The sequence spans 257 residues: Outer dense fiber protein 4 (257 aa).

A disordered region spans residues 1-41 (MDAEYSGNEFPRSEGERDQHQRPGKERKSGEAGWGTGELGQ). Residues 11 to 30 (PRSEGERDQHQRPGKERKSG) show a composition bias toward basic and acidic residues. Residue serine 64 is modified to Phosphoserine. 3 helical membrane passes run 80–100 (AQVLASELSLVAFILLLVVAF), 152–172 (VTFIFSTLMLFPINIWIFELE), and 179–199 (IGWSYFIGWLVLILYFTCAIL).

Expressed in testis and sperm; especially localized to sperm tail (at protein level).

Its subcellular location is the membrane. Component of the outer dense fibers (ODF) of spermatozoa which could be involved in sperm tail structure, sperm movement and general organization of cellular cytoskeleton. The chain is Outer dense fiber protein 4 (ODF4) from Homo sapiens (Human).